A 463-amino-acid polypeptide reads, in one-letter code: MFS-type transporter criB (463 aa).

11 helical membrane passes run 5–27, 46–66, 83–103, 106–126, 141–161, 168–188, 256–276, 293–313, 323–343, 355–375, and 402–422; these read LVLS…SGIM, MVGT…LTAG, VFVV…MLLI, LVTG…QAEI, LMLA…SFVN, MPLA…YFLP, LFLG…VINY, IFLS…ALFF, LMMA…LTAA, VAMI…LSWV, and FYFL…FLYP.

This sequence belongs to the major facilitator superfamily. Sugar transporter (TC 2.A.1.1) family.

The protein resides in the membrane. MFS-type transporter; part of the gene cluster that mediates the biosynthesis of echinulin family alkaloid. The polypeptide is MFS-type transporter criB (Aspergillus cristatus (Chinese Fuzhuan brick tea-fermentation fungus)).